The following is a 647-amino-acid chain: Neuronal PAS domain-containing protein 4-like (647 aa).

The tract at residues K16–R29 is basic motif; degenerate. The region spanning K16 to S67 is the bHLH domain. The segment at D30–S67 is helix-loop-helix motif. PAS domains are found at residues V117–G181 and S238–D274.

In terms of assembly, heterodimer; efficient DNA binding requires dimerization with another bHLH protein. Specifically expressed in endothelial and hematopoietic precursor cells.

It is found in the nucleus. Functionally, transcription factor specifically expressed in endothelial and hematopoietic precursor cells that acts as a key regulator of the endothelial differentiation cascade. Acts as an early-response transcription factor that regulates the expression of early regulators of endothelial and haematopoietic differentiation, such as etv2 and tal1. The chain is Neuronal PAS domain-containing protein 4-like from Danio rerio (Zebrafish).